We begin with the raw amino-acid sequence, 269 residues long: Pertussis toxin subunit 1 homolog (269 aa).

Positions 1–34 (MRCTRAIRQTARTGWLTWLAILAVTAPMTSPAWA) are cleaved as a signal peptide.

Belongs to the bacterial exotoxin subunit A family.

The chain is Pertussis toxin subunit 1 homolog (ptxA) from Bordetella parapertussis (strain 12822 / ATCC BAA-587 / NCTC 13253).